Here is a 92-residue protein sequence, read N- to C-terminus: Small ribosomal subunit protein uS19 (92 aa).

It belongs to the universal ribosomal protein uS19 family.

Protein S19 forms a complex with S13 that binds strongly to the 16S ribosomal RNA. The polypeptide is Small ribosomal subunit protein uS19 (Corynebacterium jeikeium (strain K411)).